Consider the following 141-residue polypeptide: Glutamyl-tRNA(Gln) amidotransferase subunit C, chloroplastic/mitochondrial (141 aa).

It belongs to the GatC family. Subunit of the heterotrimeric GatCAB amidotransferase (AdT) complex, composed of A, B and C subunits.

It is found in the mitochondrion. Its subcellular location is the plastid. The protein localises to the chloroplast. It catalyses the reaction L-glutamyl-tRNA(Gln) + L-glutamine + ATP + H2O = L-glutaminyl-tRNA(Gln) + L-glutamate + ADP + phosphate + H(+). Its function is as follows. Allows the formation of correctly charged Gln-tRNA(Gln) through the transamidation of misacylated Glu-tRNA(Gln) in chloroplasts and mitochondria. The reaction takes place in the presence of glutamine and ATP through an activated gamma-phospho-Glu-tRNA(Gln). The polypeptide is Glutamyl-tRNA(Gln) amidotransferase subunit C, chloroplastic/mitochondrial (Populus trichocarpa (Western balsam poplar)).